The following is a 686-amino-acid chain: Methionine--tRNA ligase (686 aa).

Residues 15–25 carry the 'HIGH' region motif; it reads PYANGSIHLGH. 4 residues coordinate Zn(2+): cysteine 146, cysteine 149, cysteine 159, and cysteine 162. The short motif at 332 to 336 is the 'KMSKS' region element; it reads KMSKS. Residue lysine 335 participates in ATP binding. One can recognise a tRNA-binding domain in the interval 585–686; the sequence is AFEAVDMRIA…EGAQPGMRVM (102 aa).

It belongs to the class-I aminoacyl-tRNA synthetase family. MetG type 1 subfamily. In terms of assembly, homodimer. Zn(2+) is required as a cofactor.

It localises to the cytoplasm. It carries out the reaction tRNA(Met) + L-methionine + ATP = L-methionyl-tRNA(Met) + AMP + diphosphate. In terms of biological role, is required not only for elongation of protein synthesis but also for the initiation of all mRNA translation through initiator tRNA(fMet) aminoacylation. This chain is Methionine--tRNA ligase, found in Aliivibrio salmonicida (strain LFI1238) (Vibrio salmonicida (strain LFI1238)).